Here is a 942-residue protein sequence, read N- to C-terminus: Chitin synthase 4 (942 aa).

Residues 1–124 form a disordered region; sequence MPPRYPFGGG…FDEHDGDVPL (124 aa). The segment covering 14–26 has biased composition (basic and acidic residues); that stretch reads DEAHHQPLERRTT. Over residues 27–36 the composition is skewed to polar residues; the sequence is AEAQGNSFTH. A glycan (N-linked (GlcNAc...) asparagine) is linked at Asn604. Helical transmembrane passes span 641–661, 674–694, 709–729, 755–775, 783–803, 885–905, and 909–929; these read TIQL…FFIL, VPNL…FLLS, AMVV…YLAV, IVIS…MFLE, IVQY…YAFA, VLCW…ISSI, and TIYM…RMMG.

It belongs to the chitin synthase family. Class I subfamily.

It localises to the cell membrane. The protein resides in the cytoplasmic vesicle membrane. It carries out the reaction [(1-&gt;4)-N-acetyl-beta-D-glucosaminyl](n) + UDP-N-acetyl-alpha-D-glucosamine = [(1-&gt;4)-N-acetyl-beta-D-glucosaminyl](n+1) + UDP + H(+). In terms of biological role, polymerizes chitin, a structural polymer of the cell wall and septum, by transferring the sugar moiety of UDP-GlcNAc to the non-reducing end of the growing chitin polymer. The sequence is that of Chitin synthase 4 from Mycosarcoma maydis (Corn smut fungus).